A 754-amino-acid polypeptide reads, in one-letter code: tRNA 5-methylaminomethyl-2-thiouridine biosynthesis bifunctional protein MnmC (754 aa).

The tract at residues 1 to 320 (MPSCYEHSAQ…RRQAVNNSDS (320 aa)) is tRNA (mnm(5)s(2)U34)-methyltransferase. An FAD-dependent cmnm(5)s(2)U34 oxidoreductase region spans residues 324–754 (IGGGIAGACL…RKLLKGKALC (431 aa)).

The protein in the N-terminal section; belongs to the methyltransferase superfamily. tRNA (mnm(5)s(2)U34)-methyltransferase family. This sequence in the C-terminal section; belongs to the DAO family. FAD serves as cofactor.

It localises to the cytoplasm. It carries out the reaction 5-aminomethyl-2-thiouridine(34) in tRNA + S-adenosyl-L-methionine = 5-methylaminomethyl-2-thiouridine(34) in tRNA + S-adenosyl-L-homocysteine + H(+). Its function is as follows. Catalyzes the last two steps in the biosynthesis of 5-methylaminomethyl-2-thiouridine (mnm(5)s(2)U) at the wobble position (U34) in tRNA. Catalyzes the FAD-dependent demodification of cmnm(5)s(2)U34 to nm(5)s(2)U34, followed by the transfer of a methyl group from S-adenosyl-L-methionine to nm(5)s(2)U34, to form mnm(5)s(2)U34. The protein is tRNA 5-methylaminomethyl-2-thiouridine biosynthesis bifunctional protein MnmC of Shewanella denitrificans (strain OS217 / ATCC BAA-1090 / DSM 15013).